Consider the following 649-residue polypeptide: Macrolide export ATP-binding/permease protein MacB (649 aa).

In terms of domain architecture, ABC transporter spans 7 to 245 (IELKNIVRRY…SSAQEVTPQL (239 aa)). An ATP-binding site is contributed by 43 to 50 (GASGSGKS). A run of 4 helical transmembrane segments spans residues 276 to 296 (LLTMLGIIIGIAAVVCVIALG), 529 to 549 (IAFISLVVGGIGVMNIMLVSV), 582 to 602 (LLGGMLGVLLSLLLGGLFSAF), and 612 to 632 (FSSFLIAFVCSSMIGMIFGYF).

Belongs to the ABC transporter superfamily. Macrolide exporter (TC 3.A.1.122) family. Homodimer. Part of the tripartite efflux system MacAB-TolC, which is composed of an inner membrane transporter, MacB, a periplasmic membrane fusion protein, MacA, and an outer membrane component, TolC. The complex forms a large protein conduit and can translocate molecules across both the inner and outer membranes. Interacts with MacA.

Its subcellular location is the cell inner membrane. In terms of biological role, part of the tripartite efflux system MacAB-TolC. MacB is a non-canonical ABC transporter that contains transmembrane domains (TMD), which form a pore in the inner membrane, and an ATP-binding domain (NBD), which is responsible for energy generation. Confers resistance against macrolides. The sequence is that of Macrolide export ATP-binding/permease protein MacB from Pasteurella multocida (strain Pm70).